The following is a 3059-amino-acid chain: Genome polyprotein (3059 aa).

A Peptidase S30 domain is found at 154–298; the sequence is GVTPYSVQQL…ESTMLSTHHY (145 aa). Catalysis depends on for P1 proteinase activity residues H207, D216, and S249. The short motif at 349–352 is the Involved in interaction with stylet and aphid transmission element; that stretch reads KITC. The Involved in virions binding and aphid transmission motif lies at 607 to 609; that stretch reads PTK. Residues 633–755 enclose the Peptidase C6 domain; it reads MYIAKSGYCY…DSEMKHYRVG (123 aa). Residues C641 and H714 each act as for helper component proteinase activity in the active site. The Helicase ATP-binding domain maps to 1226-1378; sequence QIAHDLHTDI…TQYPVEIRVE (153 aa). 1239–1246 serves as a coordination point for ATP; that stretch reads GAVGSGKS. The short motif at 1328–1331 is the DEFH box element; it reads DEFH. A Helicase C-terminal domain is found at 1397-1556; that stretch reads DLTSKCDNLL…GLPISTQSVT (160 aa). The short motif at 1883–1890 is the Nuclear localization signal element; the sequence is KKGKTKGK. O-(5'-phospho-RNA)-tyrosine is present on Y1905. In terms of domain architecture, Peptidase C4 spans 2032–2250; sequence STSMFRGVRD…VCWGSFHLQD (219 aa). Active-site for nuclear inclusion protein A activity residues include H2077, D2112, and C2182. A RdRp catalytic domain is found at 2516–2640; sequence WVYCDADGSQ…AIRPDMEHKL (125 aa). A Phosphothreonine modification is found at T3042.

This sequence belongs to the potyviridae genome polyprotein family. In terms of assembly, interacts with host eIF4E protein (via cap-binding region); this interaction mediates the translation of the VPg-viral RNA conjugates. Part of a complex that comprises VPg, RNA, host EIF4E and EIF4G; this interaction mediates the translation of the VPg-viral RNA conjugates. In terms of processing, VPg is uridylylated by the polymerase and is covalently attached to the 5'-end of the genomic RNA. This uridylylated form acts as a nucleotide-peptide primer for the polymerase. Phosphorylation inhibits the RNA-binding capacity of the capsid protein. Post-translationally, potyviral RNA is expressed as two polyproteins which undergo post-translational proteolytic processing. Genome polyprotein is processed by NIa-pro, P1 and HC-pro proteinases resulting in the production of at least ten individual proteins. P3N-PIPO polyprotein is cleaved by P1 and HC-pro proteinases resulting in the production of three individual proteins. The P1 proteinase and the HC-pro cleave only their respective C-termini autocatalytically. 6K1 is essential for proper proteolytic separation of P3 from CI.

Its subcellular location is the host cytoplasmic vesicle. The protein resides in the host nucleus. The protein localises to the virion. It catalyses the reaction RNA(n) + a ribonucleoside 5'-triphosphate = RNA(n+1) + diphosphate. The enzyme catalyses Hydrolyzes glutaminyl bonds, and activity is further restricted by preferences for the amino acids in P6 - P1' that vary with the species of potyvirus, e.g. Glu-Xaa-Xaa-Tyr-Xaa-Gln-|-(Ser or Gly) for the enzyme from tobacco etch virus. The natural substrate is the viral polyprotein, but other proteins and oligopeptides containing the appropriate consensus sequence are also cleaved.. The catalysed reaction is Hydrolyzes a Gly-|-Gly bond at its own C-terminus, commonly in the sequence -Tyr-Xaa-Val-Gly-|-Gly, in the processing of the potyviral polyprotein.. In terms of biological role, required for aphid transmission and also has proteolytic activity. Only cleaves a Gly-Gly dipeptide at its own C-terminus. Interacts with virions and aphid stylets. Acts as a suppressor of RNA-mediated gene silencing, also known as post-transcriptional gene silencing (PTGS), a mechanism of plant viral defense that limits the accumulation of viral RNAs. May have RNA-binding activity. Has helicase activity. It may be involved in replication. Functionally, indispensable for virus replication. Reduces the abundance of host transcripts related to jasmonic acid biosynthesis therefore altering the host defenses. In order to increase its own stability, decreases host protein degradation pathways. Its function is as follows. Indispensable for virus replication. In terms of biological role, mediates the cap-independent, EIF4E-dependent translation of viral genomic RNAs. Binds to the cap-binding site of host EIF4E and thus interferes with the host EIF4E-dependent mRNA export and translation. VPg-RNA directly binds EIF4E and is a template for transcription. Also forms trimeric complexes with EIF4E-EIF4G, which are templates for translation. Has RNA-binding and proteolytic activities. Functionally, an RNA-dependent RNA polymerase that plays an essential role in the virus replication. Its function is as follows. Involved in aphid transmission, cell-to-cell and systemis movement, encapsidation of the viral RNA and in the regulation of viral RNA amplification. In Potato virus A (PVA), this protein is Genome polyprotein.